The primary structure comprises 379 residues: Armadillo repeat-containing X-linked protein 3 (379 aa).

The Mitochondrial intermembrane segment spans residues M1–K6. Mitochondrion outer membrane (MOM)-targeting sequence stretches follow at residues M1 to K6 and R26 to K37. Residues V7–R29 traverse the membrane as a helical; Signal-anchor segment. The Cytoplasmic segment spans residues G30 to E379. Residues N34 to E69 form a disordered region. 3 positions are modified to phosphoserine: S61, S67, and S72. Positions R89–A98 are nuclear localization signal. Position 110 is a phosphoserine (S110). 3 ARM repeats span residues P111–A151, A153–V192, and V233–E272.

Belongs to the eutherian X-chromosome-specific Armcx family. In terms of assembly, interacts (via ARM domain) with MIRO1, MIRO2 and TRAK2. The interaction with Miro is calcium-dependent. Interacts with Sox10.

Its subcellular location is the mitochondrion outer membrane. It is found in the cytoplasm. The protein resides in the nucleus. Regulates mitochondrial aggregation and transport in axons in living neurons. May link mitochondria to the Trak2-kinesin motor complex via its interaction with Miro and Trak2. Mitochondrial distribution and dynamics is regulated through Armcx3 protein degradation, which is promoted by PCK and negatively regulated by Wnt1. Enhances the Sox10-mediated transactivation of the neuronal acetylcholine receptor subunit alpha-3 and beta-4 subunit gene promoters. In Rattus norvegicus (Rat), this protein is Armadillo repeat-containing X-linked protein 3 (Armcx3).